A 425-amino-acid polypeptide reads, in one-letter code: Probable mannosyltransferase KTR2 (425 aa).

Topologically, residues 1–13 (MQICKVFLTQVKK) are cytoplasmic. The helical; Signal-anchor for type II membrane protein transmembrane segment at 14–33 (LLFVSLLFCLIAQTCWLALV) threads the bilayer. Residues 34 to 89 (PYQRQLSLDSYFFRRSREVSSRYDFTRRRHMNQTLKLSSNTYNDEPLNKTKGIKNQ) form a stem region region. The Lumenal segment spans residues 34-425 (PYQRQLSLDS…SGKYFLKHDS (392 aa)). N-linked (GlcNAc...) asparagine glycosylation is found at Asn65, Asn81, Asn92, and Asn167. A catalytic region spans residues 90–425 (RENATLLMLV…SGKYFLKHDS (336 aa)). Catalysis depends on Glu313, which acts as the Nucleophile.

The protein belongs to the glycosyltransferase 15 family.

The protein localises to the golgi apparatus membrane. The protein operates within protein modification; protein glycosylation. Involved in N-linked glycosylation. Transfers an alpha-D-mannosyl residue from GDP-mannose into lipid-linked oligosaccharide, forming an alpha-(1-&gt;2)-D-mannosyl-D-mannose linkage. The protein is Probable mannosyltransferase KTR2 (KTR2) of Saccharomyces cerevisiae (strain ATCC 204508 / S288c) (Baker's yeast).